The chain runs to 52 residues: Insulin (52 aa).

Disulfide bonds link Cys-9-Cys-38, Cys-21-Cys-51, and Cys-37-Cys-42.

This sequence belongs to the insulin family. In terms of assembly, heterodimer of a B chain and an A chain linked by two disulfide bonds.

It is found in the secreted. Insulin decreases blood glucose concentration. It increases cell permeability to monosaccharides, amino acids and fatty acids. It accelerates glycolysis, the pentose phosphate cycle, and glycogen synthesis in liver. The protein is Insulin (ins) of Piaractus mesopotamicus (Small-scaled pacu).